A 435-amino-acid chain; its full sequence is GTPase Der (435 aa).

EngA-type G domains lie at 4-167 (PIVA…SPDA) and 175-350 (ISFS…ENKN). GTP contacts are provided by residues 10 to 17 (GQPNVGKS), 57 to 61 (DTGGI), 119 to 122 (NKAD), 181 to 188 (GRPNVGKS), 228 to 232 (DTAGI), and 293 to 296 (NKWD). The 85-residue stretch at 351–435 (QRIQSSVLND…PIKILPRKRK (85 aa)) folds into the KH-like domain.

Belongs to the TRAFAC class TrmE-Era-EngA-EngB-Septin-like GTPase superfamily. EngA (Der) GTPase family. In terms of assembly, associates with the 50S ribosomal subunit.

GTPase that plays an essential role in the late steps of ribosome biogenesis. The protein is GTPase Der of Lactobacillus delbrueckii subsp. bulgaricus (strain ATCC 11842 / DSM 20081 / BCRC 10696 / JCM 1002 / NBRC 13953 / NCIMB 11778 / NCTC 12712 / WDCM 00102 / Lb 14).